The following is a 72-amino-acid chain: Cell division protein ZapB (72 aa).

Residues 5-71 adopt a coiled-coil conformation; sequence ILDQLEEKIK…LRSLLGQIDN (67 aa).

This sequence belongs to the ZapB family. In terms of assembly, homodimer. The ends of the coiled-coil dimer bind to each other, forming polymers. Interacts with FtsZ.

It localises to the cytoplasm. Functionally, non-essential, abundant cell division factor that is required for proper Z-ring formation. It is recruited early to the divisome by direct interaction with FtsZ, stimulating Z-ring assembly and thereby promoting cell division earlier in the cell cycle. Its recruitment to the Z-ring requires functional FtsA or ZipA. In Actinobacillus pleuropneumoniae serotype 5b (strain L20), this protein is Cell division protein ZapB.